We begin with the raw amino-acid sequence, 578 residues long: L-ascorbate oxidase (578 aa).

The N-terminal stretch at 1-28 is a signal peptide; that stretch reads MASLGFLFFFLLPLILLELSSSRSVMAA. Plastocyanin-like domains are found at residues 30–149 and 161–328; these read TRHF…LIVE and DGEF…NYLP. Positions 87, 89, 131, and 133 each coordinate Cu cation. Cystine bridges form between Cys-108–Cys-565 and Cys-207–Cys-221. Asn-206 is a glycosylation site (N-linked (GlcNAc...) asparagine). N-linked (GlcNAc...) asparagine glycans are attached at residues Asn-349, Asn-394, Asn-438, and Asn-451. One can recognise a Plastocyanin-like 3 domain in the interval 372–550; that stretch reads HRRIILLNTQ…HMGMGVIFAE (179 aa). 8 residues coordinate Cu cation: His-472, His-475, His-477, His-533, Cys-534, His-535, His-539, and Met-544.

This sequence belongs to the multicopper oxidase family. In terms of assembly, dimer. It depends on Cu cation as a cofactor. As to expression, highly expressed in young and growing tissues.

The protein resides in the secreted. The catalysed reaction is 4 L-ascorbate + O2 = 4 monodehydro-L-ascorbate radical + 2 H2O. In terms of biological role, may be involved in a redox system involving ascorbic acid. The polypeptide is L-ascorbate oxidase (AAO) (Nicotiana tabacum (Common tobacco)).